Consider the following 942-residue polypeptide: Leucine--tRNA ligase 1 (942 aa).

Residues 39–49 (PYTNSPLHIGH) carry the 'HIGH' region motif. The 'KMSKS' region signature appears at 624–628 (KMSKS). Residue Lys627 participates in ATP binding.

Belongs to the class-I aminoacyl-tRNA synthetase family.

Its subcellular location is the cytoplasm. The catalysed reaction is tRNA(Leu) + L-leucine + ATP = L-leucyl-tRNA(Leu) + AMP + diphosphate. The polypeptide is Leucine--tRNA ligase 1 (Sulfolobus acidocaldarius (strain ATCC 33909 / DSM 639 / JCM 8929 / NBRC 15157 / NCIMB 11770)).